A 382-amino-acid polypeptide reads, in one-letter code: tRNA-specific 2-thiouridylase MnmA (382 aa).

ATP is bound by residues 18–25 (AMSGGVDS) and leucine 44. The active-site Nucleophile is cysteine 112. A disulfide bridge links cysteine 112 with cysteine 209. ATP is bound at residue glycine 136. The segment at 159–161 (RDQ) is interaction with tRNA. Cysteine 209 serves as the catalytic Cysteine persulfide intermediate.

It belongs to the MnmA/TRMU family.

It localises to the cytoplasm. It carries out the reaction S-sulfanyl-L-cysteinyl-[protein] + uridine(34) in tRNA + AH2 + ATP = 2-thiouridine(34) in tRNA + L-cysteinyl-[protein] + A + AMP + diphosphate + H(+). Functionally, catalyzes the 2-thiolation of uridine at the wobble position (U34) of tRNA, leading to the formation of s(2)U34. This chain is tRNA-specific 2-thiouridylase MnmA, found in Methylobacterium nodulans (strain LMG 21967 / CNCM I-2342 / ORS 2060).